A 311-amino-acid polypeptide reads, in one-letter code: Ribosomal RNA large subunit methyltransferase F (311 aa).

This sequence belongs to the methyltransferase superfamily. METTL16/RlmF family.

Its subcellular location is the cytoplasm. It carries out the reaction adenosine(1618) in 23S rRNA + S-adenosyl-L-methionine = N(6)-methyladenosine(1618) in 23S rRNA + S-adenosyl-L-homocysteine + H(+). Its function is as follows. Specifically methylates the adenine in position 1618 of 23S rRNA. The chain is Ribosomal RNA large subunit methyltransferase F from Pectobacterium atrosepticum (strain SCRI 1043 / ATCC BAA-672) (Erwinia carotovora subsp. atroseptica).